A 600-amino-acid chain; its full sequence is ATP-dependent ubiquitin transferase-like protein Cap2 (600 aa).

Residues 1–158 (MSTVVQQVPA…QEKLATTGDA (158 aa)) are E2-like domain. The active-site For E2-like domain is the cysteine 109. The tract at residues 159–373 (VELPAFPDQS…DQLRTRGEAA (215 aa)) is linker domain. Residues 375–600 (DIRSKKVLII…GTVEKEPHEY (226 aa)) are adenylation plus E1-like domain. Residue cysteine 548 is the For E1-like domain of the active site.

It in the C-terminal section; belongs to the HesA/MoeB/ThiF family. Crystallizes as a Cap2 homodimer bound on each side by a CdnD monomer.

Functionally, CD-NTase priming component of a CBASS antiviral system. CBASS (cyclic oligonucleotide-based antiphage signaling system) provides immunity against bacteriophages. The CD-NTase protein (CdnD) synthesizes cyclic nucleotides in response to infection; these serve as specific second messenger signals. The signals activate a diverse range of effectors, leading to bacterial cell death and thus abortive phage infection. A type II-C(AAG) CBASS system. Primes CdnD; acts as a protein transferase, conjugating CdnD, the CD-NTase, to unidentified target(s) in the cell via an E1-E2 ubiquitin transferase-like mechanism. Upon phage infection CdnD activates and makes cyclic nucleotides. During the conjugation reaction CdnD is transiently attached to AMP. Protein conjugation requires ATP. In terms of biological role, protects E.coli against phage T2 infection. When the cdnD-cap2-cap3-cap4 operon is introduced in E.coli there is a more than 10(3) decrease in the efficiency of T2 plaque formation. The operon does not protect against phage T5 and only about 10-fold against T7. The polypeptide is ATP-dependent ubiquitin transferase-like protein Cap2 (Enterobacter hormaechei subsp. hoffmannii (strain UCI 50)).